A 499-amino-acid chain; its full sequence is Maturase K (499 aa).

Belongs to the intron maturase 2 family. MatK subfamily.

Its subcellular location is the plastid. The protein localises to the chloroplast. In terms of biological role, usually encoded in the trnK tRNA gene intron. Probably assists in splicing its own and other chloroplast group II introns. The sequence is that of Maturase K from Gymnocladus dioicus (Kentucky coffee tree).